Consider the following 511-residue polypeptide: Acetylcholine receptor subunit alpha-type unc-38 (511 aa).

The first 16 residues, 1 to 16 (MRSFWLFLLLLLFCIS), serve as a signal peptide directing secretion. Residues 17–261 (FIKLTEGNED…QLRRKPLFYT (245 aa)) lie on the Extracellular side of the membrane. Residue asparagine 124 is glycosylated (N-linked (GlcNAc...) asparagine). Cysteine 151 and cysteine 165 are oxidised to a cystine. N-linked (GlcNAc...) asparagine glycosylation is present at asparagine 202. Residues cysteine 238 and cysteine 239 are joined by a disulfide bond. The next 3 helical transmembrane spans lie at 262-282 (VNLVFPCVGISFLTILVFYLP), 291-311 (LCISILVALTIFFLLLTEIIP), and 324-344 (LLFTMVMVTLSVVVTVISLNL). The Cytoplasmic portion of the chain corresponds to 345–464 (HFRTPTTHLM…WKYVAMVLDR (120 aa)). The chain crosses the membrane as a helical span at residues 465–485 (LFLLIFSIACFVGTVIILLRA).

This sequence belongs to the ligand-gated ion channel (TC 1.A.9) family. Acetylcholine receptor (TC 1.A.9.1) subfamily. In terms of assembly, component of nicotinic acetylcholine receptor. In muscles, composed of 2 non-alpha subunits lev-1 and unc-29, and 3 alpha subunits unc-38, unc-63 and lev-8. In cholinergic motoneurons, composed of 2 non-alpha subunits acr-2 and acr-3, and 3 alpha subunits unc-38, unc-63 and acr-12.

Its subcellular location is the postsynaptic cell membrane. The protein resides in the cell membrane. Alpha subunit of nicotinic acetylcholine receptor (nAChR). Probably acts in cholinergic motoneurons to regulate presynaptic neurotransmitter release, thereby ensuring normal level of excitation of cholinergic motoneurons during locomotion. Involved in nAChR sensitivity to nicotine. The protein is Acetylcholine receptor subunit alpha-type unc-38 (unc-38) of Caenorhabditis elegans.